Reading from the N-terminus, the 1025-residue chain is Retrovirus-related Pol polyprotein from type-1 retrotransposable element R2 (1025 aa).

The span at 1-11 shows a compositional bias: polar residues; sequence NQIKKSNTSTG. Positions 1–38 are disordered; the sequence is NQIKKSNTSTGARIPKAMTNPADNFAGGQWKPPGRRSA. The segment at 46 to 69 adopts a C2H2-type zinc-finger fold; that stretch reads FVCEHCLRAFTTNTGRGLHIKRAH. A compositionally biased stretch (basic and acidic residues) spans 146–158; the sequence is NRARETELTRLET. Residues 146–172 form a disordered region; it reads NRARETELTRLETADEDPASQEQDNPN. The Reverse transcriptase domain occupies 358–635; sequence MIMYHGQCPR…DQWKYLGVVY (278 aa). The segment at 755–1025 is nucleic acid-binding endonuclease; it reads SLLGGDWVAE…YRTERRRTAN (271 aa).

It carries out the reaction DNA(n) + a 2'-deoxyribonucleoside 5'-triphosphate = DNA(n+1) + diphosphate. This is Retrovirus-related Pol polyprotein from type-1 retrotransposable element R2 from Nasonia vitripennis (Parasitic wasp).